We begin with the raw amino-acid sequence, 277 residues long: 3-methyl-2-oxobutanoate hydroxymethyltransferase (277 aa).

D49 and D88 together coordinate Mg(2+). Residues D49 to S50, D88, and K118 each bind 3-methyl-2-oxobutanoate. Position 120 (E120) interacts with Mg(2+). Residue E186 is the Proton acceptor of the active site.

It belongs to the PanB family. Homodecamer; pentamer of dimers. The cofactor is Mg(2+).

It localises to the cytoplasm. The catalysed reaction is 3-methyl-2-oxobutanoate + (6R)-5,10-methylene-5,6,7,8-tetrahydrofolate + H2O = 2-dehydropantoate + (6S)-5,6,7,8-tetrahydrofolate. The protein operates within cofactor biosynthesis; (R)-pantothenate biosynthesis; (R)-pantoate from 3-methyl-2-oxobutanoate: step 1/2. Its function is as follows. Catalyzes the reversible reaction in which hydroxymethyl group from 5,10-methylenetetrahydrofolate is transferred onto alpha-ketoisovalerate to form ketopantoate. The protein is 3-methyl-2-oxobutanoate hydroxymethyltransferase of Cereibacter sphaeroides (strain ATCC 17025 / ATH 2.4.3) (Rhodobacter sphaeroides).